The primary structure comprises 507 residues: Cuticlin-4 (507 aa).

An N-terminal signal peptide occupies residues 1-19 (MFHFTRILAAFLLPTLCFC). Over 20-471 (GYSTAPSSTV…KTCFSTSRMY (452 aa)) the chain is Extracellular. Residues 42–280 (VCETASISLL…YGCSNTQPQC (239 aa)) enclose the ZP domain. Residues 292–350 (KTTETAEPYPYDSHESGYPTRPANYPVASSRYPIPTTQAPASYPSSPAPPPPGADIDNG) are disordered. N-linked (GlcNAc...) asparagine glycosylation is found at N374 and N408. A helical membrane pass occupies residues 472-492 (FTLILLCLLFATTVVVFIVIV). At 493–507 (QKQRQILAQTAFFKP) the chain is on the cytoplasmic side.

It is found in the cell membrane. Functionally, plays a role in alae formation and subsequent cuticle attachment in adults. In Caenorhabditis elegans, this protein is Cuticlin-4.